The primary structure comprises 539 residues: F-box only protein 31 (539 aa).

The segment at 11–53 (GPSRGCRRRQQRRGPAETAAADSEPDTDPEEERIEASAGVGGG) is disordered. Phosphoserine is present on Ser33. Residue Ser33 is modified to Phosphoserine; by PKB/AKT1. Positions 33–43 (SEPDTDPEEER) are enriched in acidic residues. A Phosphothreonine modification is found at Thr37. The D box motif lies at 64–69 (RCSLLE). In terms of domain architecture, F-box spans 64–110 (RCSLLELPPELLVEIFASLPGTDLPSLAQVCTKFRRILHTDTIWRRR). 4 residues coordinate Zn(2+): Cys206, His214, Cys230, and His236. Phosphoserine; by ATM is present on Ser278. Positions 297-299 (DDL) match the DDL motif motif. Residues 377–397 (VRQEQQEGGHEAGEGRGRQGP) are compositionally biased toward basic and acidic residues. Residues 377–446 (VRQEQQEGGH…PAQCGQGQPF (70 aa)) form a disordered region. The residue at position 419 (Thr419) is a Phosphothreonine; by MTOR. A Phosphoserine modification is found at Ser480.

It belongs to the FBXO31 family. In terms of assembly, part of a SCF (SKP1-cullin-F-box) protein ligase complex SCF(FBXO31) composed of CUL1, SKP1, RBX1 and FBXO31. Interacts (when phosphorylated at Ser-33) with CDC20, promoting ubiquitination by the APC/C complex. Phosphorylation at Ser-278 by ATM following gamma-irradiation results in its stabilization. Phosphorylation at Thr-419 and Ser-480 in absence of stress promotes its ubiquitination and degradation by the SCF(FBXO46) complex. Phosphorylation at Ser-33 by AKT1 promotes association with CDC20 and ubiquitination by the APC/C complex. Post-translationally, ubiquitinated by the SCF(FBXO46) complex in absence of stress, promoting its degradation. Ubiquitinated by the APC/C complex following phosphorylation at Ser-33, leading to its degradation by the proteasome. In terms of tissue distribution, highly expressed in brain. Expressed at moderate levels in most tissues, except bone marrow.

It localises to the cytoplasm. The protein resides in the cytoskeleton. The protein localises to the microtubule organizing center. Its subcellular location is the centrosome. The protein operates within protein modification; protein ubiquitination. Its function is as follows. Substrate-recognition component of the SCF(FBXO31) protein ligase complex, which specifically mediates the ubiquitination of proteins amidated at their C-terminus in response to oxidative stress, leading to their degradation by the proteasome. FBXO31 specifically recognizes and binds C-terminal peptides bearing an amide: C-terminal amidation in response to oxidative stress takes place following protein fragmentation. The SCF(FBXO31) also plays a role in G1 arrest following DNA damage by mediating ubiquitination of phosphorylated cyclin-D1 (CCND1), promoting its degradation by the proteasome, resulting in G1 arrest. The SCF(FBXO31) complex is however not a major regulator of CCND1 stability during the G1/S transition. In response to genotoxic stress, the SCF(FBXO31) complex directs ubiquitination and degradation of phosphorylated MDM2, thereby promoting p53/TP53-mediated DNA damage response. SCF(FBXO31) complex is required for genomic integrity by catalyzing ubiquitination and degradation of cyclin-A (CCNA1 and/or CCNA2) during the G1 phase. In response to genotoxic stress, the SCF(FBXO31) complex directs ubiquitination and degradation of phosphorylated FBXO46 and MAP2K6. SCF(FBXO31) complex promotes ubiquitination and degradation of CDT1 during the G2 phase to prevent re-replication. The SCF(FBXO31) complex also mediates ubiquitination and degradation of DUSP6, OGT and PARD6A. This is F-box only protein 31 from Homo sapiens (Human).